Here is an 82-residue protein sequence, read N- to C-terminus: DNA-directed RNA polymerase subunit omega (82 aa).

This sequence belongs to the RNA polymerase subunit omega family. As to quaternary structure, the RNAP catalytic core consists of 2 alpha, 1 beta, 1 beta' and 1 omega subunit. When a sigma factor is associated with the core the holoenzyme is formed, which can initiate transcription.

It carries out the reaction RNA(n) + a ribonucleoside 5'-triphosphate = RNA(n+1) + diphosphate. Functionally, promotes RNA polymerase assembly. Latches the N- and C-terminal regions of the beta' subunit thereby facilitating its interaction with the beta and alpha subunits. In Lachnoclostridium phytofermentans (strain ATCC 700394 / DSM 18823 / ISDg) (Clostridium phytofermentans), this protein is DNA-directed RNA polymerase subunit omega.